The following is a 1775-amino-acid chain: Internalin I (1775 aa).

The signal sequence occupies residues 1–28 (MKKKFSIVIISVLLLGYLAPFDTLLVGA). Residues 36 to 50 (DTTVKTAETETATEA) are compositionally biased toward low complexity. The disordered stretch occupies residues 36 to 97 (DTTVKTAETE…SNIKTEINTD (62 aa)). The segment covering 58–85 (DNEKAEEPKEAEASKETTEKEEKAKTKE) has biased composition (basic and acidic residues). 27 LRR repeats span residues 152–176 (AISQ…EGLQ), 180–201 (NLTS…KDLV), 202–224 (NLVS…EGLV), 225–247 (NLQE…AALP), 248–269 (VLKE…NPAG), 274–295 (ELET…AKLP), 296–318 (KLKN…KGAT), 319–341 (KLQL…SGLS), 342–364 (ELEM…KDLP), 365–386 (NLVN…NNLP), 387–409 (KLQT…TDMP), 410–431 (QLKT…DNLP), 432–453 (KLEK…NDLP), 454–475 (RLSY…KKLP), 476–497 (LLEW…TNFP), 498–519 (SLNY…TELP), 520–541 (SLKE…HDMP), 542–563 (NLRK…DNLP), 564–585 (KLQN…HDLP), 586–607 (SLET…DNLP), 608–629 (ELTY…GDLP), 630–650 (KLEI…GTMD), 654–675 (KLRN…GNLS), 682–704 (NLTE…STLS), 705–726 (RLIY…SNLT), 727–748 (TLQE…SDLD), and 749–770 (NLNK…ANMV). One can recognise an LRRCT domain in the interval 782–869 (TYTLPTVLSY…SAVKVTANAE (88 aa)). 3 consecutive MucBP domains span residues 1507 to 1566 (DAAA…EQTV), 1572 to 1631 (AIEP…PQTI), and 1641 to 1702 (SKKS…SQTV). Residues 1713 to 1737 (SKDEPKVKGKTNQPPSADTKLKVDN) form a disordered region. The LPXTG sorting signal signature appears at 1740 to 1744 (LPATG). Thr1743 carries the pentaglycyl murein peptidoglycan amidated threonine modification. The propeptide at 1744-1775 (GDTENMALAVLIGFNMLLVASIFLFRKPKTNQ) is removed by sortase.

This sequence belongs to the internalin family.

The protein localises to the secreted. The protein resides in the cell wall. A role in virulence could not be demonstrated. The protein is Internalin I (inlI) of Listeria monocytogenes serotype 4b (strain F2365).